The primary structure comprises 199 residues: Recombination protein RecR (199 aa).

Residues 56–71 form a C4-type zinc finger; the sequence is CSICFNVSQDDQCRIC. A Toprim domain is found at 79–174; sequence SVLCVVEEYK…RVTRLASGLP (96 aa).

It belongs to the RecR family.

Functionally, may play a role in DNA repair. It seems to be involved in an RecBC-independent recombinational process of DNA repair. It may act with RecF and RecO. The polypeptide is Recombination protein RecR (Nocardioides sp. (strain ATCC BAA-499 / JS614)).